We begin with the raw amino-acid sequence, 423 residues long: MSEDHGKDYTLESDSELRFEIEQKDAKVLVSLVSGFAELFGTELVKKKQYEFGVGAKVAIFTYQGCVLHVSGKMDVCYISKETPMVQYVNCHAALEQFRMEAEEKDRYGPVAMVVGPMDVGKSTLCRILLNYAVRVGRRPLYADLDVGQGSIAISGSVATILIERPANVEEGFAKTAPLVYHFGHKSPSGNSVLYNAVVSKMAEVTLQSLNSNKRTKSSGIIINTCGWVKGSGYAHLLHAAKAYGACAIFVLDQERLYNELLRDVPKGVHVVLLPKSGGVVERSKELRHEARDQRIKEYFYGNTRAPFYPFSFEVKFQDLRLYKIGAPPLPDSCMPIGMKAEDNKTKVVAVTPTPALIHHVLALSFAESVEDDVIGTNVAGFCCVTEVDMERQAVMLLSPQPRPLPPNALLLWSELQFMDNHT.

ATP-binding positions include glutamate 16, lysine 57, and 119-124 (DVGKST).

Belongs to the Clp1 family. Clp1 subfamily.

The protein resides in the nucleus. Functionally, required for endonucleolytic cleavage during polyadenylation-dependent pre-mRNA 3'-end formation. This Drosophila simulans (Fruit fly) protein is Protein CLP1 homolog (cbc).